A 52-amino-acid chain; its full sequence is Insulin (52 aa).

3 disulfide bridges follow: cysteine 7-cysteine 38, cysteine 19-cysteine 51, and cysteine 37-cysteine 42.

It belongs to the insulin family. In terms of assembly, heterodimer of a B chain and an A chain linked by two disulfide bonds.

It is found in the secreted. Its function is as follows. Insulin decreases blood glucose concentration. It increases cell permeability to monosaccharides, amino acids and fatty acids. It accelerates glycolysis, the pentose phosphate cycle, and glycogen synthesis in liver. This Amia calva (Bowfin) protein is Insulin (ins).